A 615-amino-acid chain; its full sequence is MSTNFAATTFTDPSKIRNFCIIAHIDHGKSTLADRILQLSQVVEERDMRDQYLDNMDIERERGITIKAQNVRLPWIPRSGEFEGQEIVMQMIDTPGHVDFTYEVSRALEACEGAILLVDAAQGIEAQTLANLYLAMENDLEIIPVLNKIDLPAADPEKYALEIAHIIGCEPEEVLRVSGKTGEGVPELLDKVAELIPAPTSEFGEDAPARAMVFDSVYDTYRGVVTYIRMMDGKLTPRQKVTMMATGTNHELLEVGIVSPTMQKCKGLGPGEVGYLITGVKNVRETKVGDTITWASNGASEPLKGYADPNPMVYSGLFPISQADFPDLRDALEKLQLNDASLTFEPETSVALGFGFRCGFLGLLHMEITRDRLEREFGLDLISTAPSVTYRVVAEDGEESMVHNPSDWPGGKLREVYEPIVKMTIIVPEEFVGSTMELCQSKRGQMGGMDYLSEDRVELRYTMPLGEIIFDFFDMLKSRTKGYASLNYEEAGEQLADLVKVDILLNGDPVDAFSAIVHRDSAQWYGNKMTKKLKELIPRQQFEVPVQAAIGSKIIARENIRAMRKDVLAKCYGGDISRKRKLLEKQKAGKKRMKSIGSVSVPQEAFVAALSTDAE.

The 187-residue stretch at 14–200 folds into the tr-type G domain; sequence SKIRNFCIIA…KVAELIPAPT (187 aa). GTP is bound by residues 26–31 and 147–150; these read DHGKST and NKID.

This sequence belongs to the TRAFAC class translation factor GTPase superfamily. Classic translation factor GTPase family. LepA subfamily.

The protein localises to the cell membrane. The catalysed reaction is GTP + H2O = GDP + phosphate + H(+). Required for accurate and efficient protein synthesis under certain stress conditions. May act as a fidelity factor of the translation reaction, by catalyzing a one-codon backward translocation of tRNAs on improperly translocated ribosomes. Back-translocation proceeds from a post-translocation (POST) complex to a pre-translocation (PRE) complex, thus giving elongation factor G a second chance to translocate the tRNAs correctly. Binds to ribosomes in a GTP-dependent manner. The chain is Elongation factor 4 from Corynebacterium aurimucosum (strain ATCC 700975 / DSM 44827 / CIP 107346 / CN-1) (Corynebacterium nigricans).